A 1034-amino-acid polypeptide reads, in one-letter code: Beta-galactosidase (1034 aa).

Residues asparagine 108 and aspartate 207 each coordinate substrate. Aspartate 207 serves as a coordination point for Na(+). Mg(2+) is bound by residues glutamate 423, histidine 425, and glutamate 468. Residues glutamate 468 and 544–547 (EYAH) contribute to the substrate site. Glutamate 468 serves as the catalytic Proton donor. Glutamate 544 functions as the Nucleophile in the catalytic mechanism. Residue asparagine 604 participates in Mg(2+) binding. The Na(+) site is built by phenylalanine 608 and asparagine 611. 2 residues coordinate substrate: asparagine 611 and tryptophan 1010.

It belongs to the glycosyl hydrolase 2 family. Homotetramer. Mg(2+) is required as a cofactor. The cofactor is Na(+).

The enzyme catalyses Hydrolysis of terminal non-reducing beta-D-galactose residues in beta-D-galactosides.. The sequence is that of Beta-galactosidase from Klebsiella pneumoniae.